The following is a 415-amino-acid chain: MATH domain and coiled-coil domain-containing protein At2g42465 (415 aa).

Residues R6–I130 form the MATH domain. Residues F244–K341 are a coiled coil.

The polypeptide is MATH domain and coiled-coil domain-containing protein At2g42465 (Arabidopsis thaliana (Mouse-ear cress)).